The primary structure comprises 984 residues: Translation initiation factor IF-2 (984 aa).

A disordered region spans residues 32–402 (PAKNATSTLT…TQPQRAAKRK (371 aa)). The span at 89-123 (PAETEAQASPAQPEAKAAAPAAEAEEAPAAKPAPA) shows a compositional bias: low complexity. Basic and acidic residues predominate over residues 126 to 136 (RKAEARTEAPR). 2 stretches are compositionally biased toward low complexity: residues 154-172 (APETAAPAQPAPEAQSAAP) and 187-197 (AETTESAPAEP). Positions 198 to 220 (AAEKAPAEKRRYEVSMEPEKDSV) are enriched in basic and acidic residues. Low complexity predominate over residues 255–270 (RPDPAAVQAQAAAAAQ). The segment covering 271–283 (AREERAERPDRGP) has biased composition (basic and acidic residues). Over residues 308–334 (GRPAPRSGAPRPGGARPAAGFGQPAQA) the composition is skewed to low complexity. Residues 482 to 651 (PRPPVVTIMG…ALQAEVLELK (170 aa)) enclose the tr-type G domain. The interval 491-498 (GHVDHGKT) is G1. A GTP-binding site is contributed by 491–498 (GHVDHGKT). Residues 516–520 (GITQH) form a G2 region. The interval 537–540 (DTPG) is G3. Residues 537–541 (DTPGH) and 591–594 (NKID) contribute to the GTP site. Positions 591–594 (NKID) are G4. Positions 627–629 (SAK) are G5.

Belongs to the TRAFAC class translation factor GTPase superfamily. Classic translation factor GTPase family. IF-2 subfamily.

The protein resides in the cytoplasm. Its function is as follows. One of the essential components for the initiation of protein synthesis. Protects formylmethionyl-tRNA from spontaneous hydrolysis and promotes its binding to the 30S ribosomal subunits. Also involved in the hydrolysis of GTP during the formation of the 70S ribosomal complex. This is Translation initiation factor IF-2 from Oleidesulfovibrio alaskensis (strain ATCC BAA-1058 / DSM 17464 / G20) (Desulfovibrio alaskensis).